The following is a 790-amino-acid chain: Accumulates dyads protein 3 (790 aa).

The segment at 8–122 (LNKPESLKEQ…NTLKSPNKFL (115 aa)) is disordered. Residues 39–49 (PESKPFRERRS) are compositionally biased toward basic and acidic residues. Composition is skewed to polar residues over residues 50–78 (QTWI…ISKL) and 89–108 (ESWA…TLEN). 4 coiled-coil regions span residues 241 to 328 (ISKE…REEK), 361 to 430 (LVSE…RLND), 477 to 498 (KNLE…LEKN), and 540 to 658 (QQFR…LKKL).

As to quaternary structure, interacts directly with SSP1. Probable component of a SPB complex composed of ADY3, SSP1, DON1, MPC54, SPO21/MPC70, NUD1 and CNM67. In terms of processing, phosphorylated.

It localises to the prospore membrane. It is found in the cytoplasm. Its subcellular location is the cytoskeleton. The protein resides in the microtubule organizing center. The protein localises to the spindle pole body. Its function is as follows. Involved in the pathway that organizes the prospore membrane (PSM) during sporulation. Mediates the assembly of the DON1 ring structure at the leading edge of PSM during meiosis II. May constitute a physical link between SSP1-containing PSM precursors and the spindle pole body (SPB) and may facilitate the recruitment of other factors that are required to promote spore wall formation. The sequence is that of Accumulates dyads protein 3 (ADY3) from Saccharomyces cerevisiae (strain ATCC 204508 / S288c) (Baker's yeast).